The primary structure comprises 98 residues: NADH-ubiquinone oxidoreductase chain 4L (98 aa).

3 consecutive transmembrane segments (helical) span residues 2–22, 30–50, and 61–81; these read PFIYINILLALTTALLGLLLF, LLCLEGLMLSLFIMSALTTLG, and IILMVFAACETALGLALLVTI.

The protein belongs to the complex I subunit 4L family. In terms of assembly, core subunit of respiratory chain NADH dehydrogenase (Complex I) which is composed of 45 different subunits.

The protein localises to the mitochondrion inner membrane. The catalysed reaction is a ubiquinone + NADH + 5 H(+)(in) = a ubiquinol + NAD(+) + 4 H(+)(out). Functionally, core subunit of the mitochondrial membrane respiratory chain NADH dehydrogenase (Complex I) which catalyzes electron transfer from NADH through the respiratory chain, using ubiquinone as an electron acceptor. Part of the enzyme membrane arm which is embedded in the lipid bilayer and involved in proton translocation. This chain is NADH-ubiquinone oxidoreductase chain 4L (MT-ND4L), found in Bradypus tridactylus (Pale-throated three-toed sloth).